The sequence spans 290 residues: MAGKEIYHKMKDKVKDAFSSSGPETGKGKTKLSGKRVKHGYHLVKGKSNHPMEDYLVAEYRQEGEHDLGLFAIFDGHLGHTVPDFLRSHLFDNILKQPEFLSNPQAAIRNAYQLTDAKILESAAELGRGGSTAVTAILISSENSVNLVVANVGDSRAVISKSGVAKQLSVDHEPNKERHSIEKKGGFVSNLPGDVPRVDGQLAVARAFGDRSLKKHLSSEPDVVEEPIDENTDFLILASDGLWKVMSNQEAVDEIKDFKDAQAAAKHLTEQAVNRKSKDDISCIVVKFLC.

One can recognise a PPM-type phosphatase domain in the interval 38–288 (KHGYHLVKGK…DDISCIVVKF (251 aa)). The Mn(2+) site is built by Asp-75, Gly-76, Asp-240, and Asp-279.

It belongs to the PP2C family. Mg(2+) serves as cofactor. It depends on Mn(2+) as a cofactor.

The catalysed reaction is O-phospho-L-seryl-[protein] + H2O = L-seryl-[protein] + phosphate. It carries out the reaction O-phospho-L-threonyl-[protein] + H2O = L-threonyl-[protein] + phosphate. The sequence is that of Probable protein phosphatase 2C 62 from Oryza sativa subsp. japonica (Rice).